We begin with the raw amino-acid sequence, 282 residues long: Aldo-keto reductase MT3049 (282 aa).

Residue Tyr57 is the Proton donor of the active site. Positions 197, 235, 237, 238, 239, 243, 246, 247, and 273 each coordinate NADPH.

The protein belongs to the aldo/keto reductase family.

The polypeptide is Aldo-keto reductase MT3049 (Mycobacterium tuberculosis (strain CDC 1551 / Oshkosh)).